The following is a 315-amino-acid chain: Olfactory receptor 2V1 (315 aa).

Transmembrane regions (helical) follow at residues 31–51 (TVMLVFTVALCGNVLLILLIY), 59–79 (PMYFFLSQLSLMDLMLVCNIV), 100–120 (IQIGFFVSLVGSEGLLLGLMA), 145–165 (IAGSSWAFGILDGIIQMVAAM), 196–216 (FDTLLFACCVFMLLLPFSIIV), 239–259 (LATCSSHLTAVSLFYGAAMFI), and 273–293 (KVVSIFYTVLTPMLNPLIYSL). Cys98 and Cys180 form a disulfide bridge.

Belongs to the G-protein coupled receptor 1 family.

It is found in the cell membrane. Odorant receptor. Activated by (+) and (-)-limonene. This chain is Olfactory receptor 2V1, found in Mus musculus (Mouse).